A 168-amino-acid chain; its full sequence is Endoribonuclease YbeY (168 aa).

Zn(2+) contacts are provided by His122, His126, and His132.

It belongs to the endoribonuclease YbeY family. It depends on Zn(2+) as a cofactor.

The protein resides in the cytoplasm. Its function is as follows. Single strand-specific metallo-endoribonuclease involved in late-stage 70S ribosome quality control and in maturation of the 3' terminus of the 16S rRNA. The polypeptide is Endoribonuclease YbeY (Brucella abortus (strain 2308)).